A 462-amino-acid polypeptide reads, in one-letter code: Succinate semialdehyde dehydrogenase [NAD(P)+] Sad (462 aa).

NADP(+) contacts are provided by residues 136–137 (WN), 160–163 (KHAP), and 212–213 (GS). Residue glutamate 234 is the Proton acceptor of the active site. Position 235 (leucine 235) interacts with NADP(+). The Nucleophile role is filled by cysteine 268. Glutamate 365 is an NADP(+) binding site.

It belongs to the aldehyde dehydrogenase family. As to quaternary structure, homodimer.

It catalyses the reaction succinate semialdehyde + NAD(+) + H2O = succinate + NADH + 2 H(+). The enzyme catalyses succinate semialdehyde + NADP(+) + H2O = succinate + NADPH + 2 H(+). It functions in the pathway amino-acid degradation; 4-aminobutanoate degradation. In terms of biological role, catalyzes the NAD(+)-dependent oxidation of succinate semialdehyde to succinate. It acts preferentially with NAD as cosubstrate but can also use NADP. Prevents the toxic accumulation of succinate semialdehyde (SSA) and plays an important role when arginine and putrescine are used as the sole nitrogen or carbon sources. In Escherichia coli (strain K12), this protein is Succinate semialdehyde dehydrogenase [NAD(P)+] Sad (sad).